The following is a 120-amino-acid chain: Secreted effector PIT2 (120 aa).

The first 25 residues, 1 to 25, serve as a signal peptide directing secretion; it reads MLFRSAFVLLIVAFASACLVQHVQA. The PID14 protease inhibitor domain stretch occupies residues 46 to 59; that stretch reads KLNRRWWFGFTGSL.

Interacts with host cysteine proteases CP1A, CP1B, XCP2 and CP2. In terms of processing, cleaved by host target papain-like cysteine proteases (PLCPs) to release the embedded inhibitor peptide PID14.

The protein resides in the secreted. Secreted effector required for virulence. Functions as an inhibitor of a set of apoplastic maize papain-like cysteine proteases (PLCPs) including CP1A, CP1B, XCP2 and CP2, whose activity is directly linked with salicylic-acid-associated plant defenses. Acts as a substrate mimicking molecule for apoplastic PLCPs and its processing releases the embedded inhibitor peptide PID14, which in turn blocks PLCPs to modulate host immunity. In Mycosarcoma maydis (Corn smut fungus), this protein is Secreted effector PIT2.